Here is a 701-residue protein sequence, read N- to C-terminus: MKMNLKRLVVTFFSCITFLLKFTIAAAEPPEGFPEPLNPTNFKEELSKGLHIIDFYSPYCPHCKHLAPVWMETWEEFKEESKTLNITFSQVNCIESADLCGDENIEYFPEIRLYNPSGYIKSFTETPRTKESLIAFARRESMDPNNLDTDLDSAKSESQYLEGFDFLELIAGKATRPHLVSFWPTKDMKNSDDSLEFKNCDKCHEFQRTWKIISRQLAVDDINTGHVNCESNPTICEELGFGDLVKITNHRADREPKVALVLPNKTSNNLFDYPNGYSAKSDGYVDFARRTFTNSKFPNITEGELEKKANRDIDFLQERGRVTNNDIHLVFSYDPETVVIEDFDILEYLIEPLSKIPNIYLHQIDKNLINLSRNLFGRMYEKINYDASQTQKVFNKEYFTMNTVTQLPTFFMFKDGDPISYVFPGYSTTEMRNIDAIMDWVKKYSNPLVTEVDSSNLKKLISFQTKSYSDLAIQLISSTDHKHIKGSNKLIKNLLLASWEYEHIRMENNFEEINERRARKADGIKKIKEKKAPANKIVDKMREEIPHMDQKKLLLGYLDISKEKNFFRKYGITGEYKIGDVIIIDKSNNYYYNKDNFGNSLTSNNPQLLREAFVSLNIPSKALYSSKLKGRLINSPFHNVLSFLDIIHGNGMPGYLIVIVLFIAILKGPSIYRRYKVRKHYRAKRNAVGILGNMEKKKNQD.

Residues 1-27 form the signal peptide; that stretch reads MKMNLKRLVVTFFSCITFLLKFTIAAA. The 115-residue stretch at 28–142 folds into the Thioredoxin 1 domain; that stretch reads EPPEGFPEPL…LIAFARRESM (115 aa). A disulfide bridge links Cys-60 with Cys-63. N-linked (GlcNAc...) asparagine glycosylation occurs at Asn-85. A disulfide bond links Cys-200 and Cys-203. N-linked (GlcNAc...) asparagine glycosylation is found at Asn-264, Asn-299, and Asn-370. In terms of domain architecture, Thioredoxin 2 spans 408-446; it reads PTFFMFKDGDPISYVFPGYSTTEMRNIDAIMDWVKKYSN. Residues 646-666 form a helical membrane-spanning segment; that stretch reads IIHGNGMPGYLIVIVLFIAIL.

Belongs to the protein disulfide isomerase family. As to quaternary structure, interacts with mutated PMA1-D378N but not wild type PMA1. Interacts with EUG1, KAR2, MPD1 and PDI1.

The protein resides in the endoplasmic reticulum membrane. The enzyme catalyses Catalyzes the rearrangement of -S-S- bonds in proteins.. In terms of biological role, acts as a membrane-bound chaperone in endoplasmic reticulum quality control. Probably facilitates presentation of substrate to membrane-bound components of the degradation machinery. This chain is ER-retained PMA1-suppressing protein 1 (EPS1), found in Saccharomyces cerevisiae (strain ATCC 204508 / S288c) (Baker's yeast).